The primary structure comprises 104 residues: MTTSRKKTRNLREHVSVGHGRFGKHRKLPGSRGNAGVGMRYFHKLRNKFYCQIVNLDKLWSMVLGKGFLPENKPVVVKAKLVSNTDEKKIKEAGSAVVLTFLLY.

This sequence belongs to the universal ribosomal protein uL15 family.

The sequence is that of Large ribosomal subunit protein uL15z (RPL27AA) from Arabidopsis thaliana (Mouse-ear cress).